A 260-amino-acid polypeptide reads, in one-letter code: Thiamine thiazole synthase (260 aa).

NAD(+) is bound by residues A36, 55 to 56 (EQ), G63, and 154 to 156 (HVD). Fe cation contacts are provided by D156 and H171. NAD(+) is bound at residue M224. Residue R234 participates in glycine binding.

This sequence belongs to the THI4 family. In terms of assembly, homooctamer; tetramer of dimers. Requires Fe(2+) as cofactor.

It carries out the reaction hydrogen sulfide + glycine + NAD(+) = ADP-5-ethyl-4-methylthiazole-2-carboxylate + nicotinamide + 3 H2O + H(+). It functions in the pathway cofactor biosynthesis; thiamine diphosphate biosynthesis. Its function is as follows. Involved in the biosynthesis of the thiazole moiety of thiamine. Catalyzes the conversion of NAD and glycine to adenosine diphosphate 5-(2-hydroxyethyl)-4-methylthiazole-2-carboxylate (ADT), an adenylated thiazole intermediate, using free sulfide as a source of sulfur. The protein is Thiamine thiazole synthase of Methanosarcina barkeri (strain Fusaro / DSM 804).